Consider the following 474-residue polypeptide: tRNA-2-methylthio-N(6)-dimethylallyladenosine synthase (474 aa).

The MTTase N-terminal domain maps to 3–120 (KKLHIKTWGC…LPEMINSVRG (118 aa)). 6 residues coordinate [4Fe-4S] cluster: C12, C49, C83, C157, C161, and C164. The region spanning 143-375 (RAEGPTAFVS…QERINQQAMA (233 aa)) is the Radical SAM core domain. Positions 378–441 (RRMLGTTQRI…PNSLRGKVVR (64 aa)) constitute a TRAM domain.

It belongs to the methylthiotransferase family. MiaB subfamily. Monomer. [4Fe-4S] cluster serves as cofactor.

Its subcellular location is the cytoplasm. It catalyses the reaction N(6)-dimethylallyladenosine(37) in tRNA + (sulfur carrier)-SH + AH2 + 2 S-adenosyl-L-methionine = 2-methylsulfanyl-N(6)-dimethylallyladenosine(37) in tRNA + (sulfur carrier)-H + 5'-deoxyadenosine + L-methionine + A + S-adenosyl-L-homocysteine + 2 H(+). In terms of biological role, catalyzes the methylthiolation of N6-(dimethylallyl)adenosine (i(6)A), leading to the formation of 2-methylthio-N6-(dimethylallyl)adenosine (ms(2)i(6)A) at position 37 in tRNAs that read codons beginning with uridine. The protein is tRNA-2-methylthio-N(6)-dimethylallyladenosine synthase of Escherichia coli O81 (strain ED1a).